The following is a 153-amino-acid chain: Small ribosomal subunit protein bS16 (153 aa).

It belongs to the bacterial ribosomal protein bS16 family.

The sequence is that of Small ribosomal subunit protein bS16 from Leifsonia xyli subsp. xyli (strain CTCB07).